The sequence spans 1820 residues: Cation channel sperm-associated targeting subunit tau (1820 aa).

Positions 87 to 222 (DSEELEITQE…QKGCFIEEVQ (136 aa)) constitute a C2 domain. 4 disordered regions span residues 360 to 383 (SEET…ELEN), 403 to 443 (LLDN…TEVH), 695 to 722 (EVSM…SSME), and 838 to 857 (SSTK…SGSS). A compositionally biased stretch (polar residues) spans 415-443 (PTLNQSDQDNSTADASKNDESTPSPTEVH).

As to quaternary structure, component of the CatSper complex or CatSpermasome composed of the core pore-forming members CATSPER1, CATSPER2, CATSPER3 and CATSPER4 as well as auxiliary members CATSPERB, CATSPERG, CATSPERD, CATSPERE, CATSPERZ, C2CD6/CATSPERT, TMEM249, TMEM262 and EFCAB9. HSPA1 may be an additional auxiliary complex member. The core complex members CATSPER1, CATSPER2, CATSPER3 and CATSPER4 form a heterotetrameric channel. The auxiliary CATSPERB, CATSPERG, CATSPERD and CATSPERE subunits form a pavilion-like structure over the pore which stabilizes the complex through interactions with CATSPER4, CATSPER3, CATSPER1 and CATSPER2 respectively. SLCO6C1 interacts with CATSPERE and TMEM262/CATSPERH interacts with CATSPERB, further stabilizing the complex. C2CD6/CATSPERT interacts at least with CATSPERD and is required for targeting the CatSper complex in the flagellar membrane. In terms of tissue distribution, expressed in testis (at protein level).

It localises to the cell projection. The protein localises to the cilium. The protein resides in the flagellum membrane. In terms of biological role, auxiliary component of the CatSper complex, a complex involved in sperm cell hyperactivation. Sperm cell hyperactivation is needed for sperm motility which is essential late in the preparation of sperm for fertilization. Required for CatSper complex targeting and trafficking into the quadrilinear nanodomains. Targets the preassembled CatSper complexes to elongating flagella, where it links the channel-carrying vesicles and motor proteins. This is Cation channel sperm-associated targeting subunit tau from Homo sapiens (Human).